The primary structure comprises 238 residues: Orotidine 5'-phosphate decarboxylase (238 aa).

Substrate contacts are provided by residues aspartate 10, lysine 32, 59–68 (DLKLHDIPNT), threonine 122, arginine 184, glutamine 193, glycine 213, and arginine 214. The Proton donor role is filled by lysine 61.

It belongs to the OMP decarboxylase family. Type 1 subfamily. Homodimer.

It catalyses the reaction orotidine 5'-phosphate + H(+) = UMP + CO2. It participates in pyrimidine metabolism; UMP biosynthesis via de novo pathway; UMP from orotate: step 2/2. Catalyzes the decarboxylation of orotidine 5'-monophosphate (OMP) to uridine 5'-monophosphate (UMP). This is Orotidine 5'-phosphate decarboxylase from Bacillus cereus (strain ZK / E33L).